Here is a 962-residue protein sequence, read N- to C-terminus: Splicing regulator ARVCF (962 aa).

The stretch at 8–46 (SAASILASVKEQEARFERLTRALEQERRHVALQLERAQQ) forms a coiled coil. The disordered stretch occupies residues 95-122 (TVEEDPGTPTSHVSIVTSEDGTTRRTET). Phosphothreonine occurs at positions 102 and 104. Positions 102–114 (TPTSHVSIVTSED) are enriched in polar residues. Position 170 is an omega-N-methylarginine (Arg-170). Disordered regions lie at residues 186–253 (GGGF…LPER) and 266–290 (RSLAADDEGGPELEPDYGTATRRRP). The segment covering 206–217 (RGLGMRPPRAGP) has biased composition (low complexity). Ser-267 is modified (phosphoserine). The span at 270–280 (ADDEGGPELEP) shows a compositional bias: acidic residues. Phosphoserine occurs at positions 332, 335, 343, and 345. 6 ARM repeats span residues 348-387 (SARKEPRWRDPELPEVLAMLRHPVDPVKANAAAYLQHLCF), 390-429 (EGVKRRVRQLRGLPLLVALLDHPRAEVRRRACGALRNLSY), 433-467 (TDNKAAIRDCGGVPALVRLLRAARDNEVRELVTGT), 468-508 (LWNL…NEDS), 526-565 (LRNVSSDGAEARRRLRECEGLVDALLHALQSAVGRKDTDN), and 575-622 (MRNL…GKKA). The segment at 590 to 614 (DRYQEAEPGPLGSAVGSQRRRRDDA) is disordered. Ser-606 carries the phosphoserine modification. Positions 607-623 (QRRRRDDASCFGGKKAK) match the Nuclear localization signal motif. Thr-642 bears the Phosphothreonine mark. ARM repeat units lie at residues 646–686 (PKRT…AAGA), 699–738 (TYIRATVRKERGLPVLVELLQSETDKVVRAVAIALRNLSL), 739–781 (DRRN…AVLN), and 782–826 (TIHE…SHVL). Residues 776-962 (VVAVLNTIHE…AKPQPVDSWV (187 aa)) form a required for interaction with RNA-binding proteins DDX5, HNRNPH2 and SRSF1 and with mRNAs region. Residues 854–962 (ATAKGPKGAL…AKPQPVDSWV (109 aa)) are disordered. Residues Ser-864 and Ser-871 each carry the phosphoserine modification. At Thr-872 the chain carries Phosphothreonine. The segment covering 878–887 (KSLEGEKTGS) has biased composition (basic and acidic residues). Phosphoserine is present on Ser-915. Residues 920 to 932 (ASEKEPLKLDPSR) are compositionally biased toward basic and acidic residues.

This sequence belongs to the beta-catenin family. Component of a ribonucleoprotein complex containing mRNAs and RNA-binding proteins including DDX5, HNRNPH2 and SRSF1 as well as ARVCF. Interacts (via the extreme C-terminus) with FRMPD2 (via the PDZ 2 domain). Interacts with CCDC85B. Found in all the examined tissues including heart, brain, liver and kidney. Found at low level in lung. Expressed in dermal connective tissue, salivary gland duct and in the corneal layer (at protein level). Expressed in arrector pili muscle (at protein level). High levels detected in epithelial cells with lower levels found in fibroblasts and T lymphocytes.

The protein localises to the cell junction. Its subcellular location is the adherens junction. It is found in the nucleus. It localises to the cytoplasm. In terms of biological role, contributes to the regulation of alternative splicing of pre-mRNAs. This Homo sapiens (Human) protein is Splicing regulator ARVCF.